Consider the following 331-residue polypeptide: Sideroflexin-5 (331 aa).

The next 4 helical transmembrane spans lie at 104–126, 153–175, 243–265, and 278–300; these read PFGW…LLFW, YIGA…TYFI, TTMV…MPYL, and HIFV…ALAL.

It belongs to the sideroflexin family.

Its subcellular location is the mitochondrion inner membrane. It catalyses the reaction citrate(in) = citrate(out). Its function is as follows. Mitochondrial amino-acid transporter. The protein is Sideroflexin-5 of Caenorhabditis elegans.